The sequence spans 486 residues: Kynureninase 1 (486 aa).

Residues 53 to 72 (DLKRTTLDPNQEPEHSPTPS) form a disordered region. Pyridoxal 5'-phosphate is bound by residues Leu-146, Thr-147, 174-177 (FPSD), Ser-231, Asp-260, His-263, and Tyr-285. At Lys-286 the chain carries N6-(pyridoxal phosphate)lysine. 2 residues coordinate pyridoxal 5'-phosphate: Trp-326 and Asn-354.

This sequence belongs to the kynureninase family. Homodimer. The cofactor is pyridoxal 5'-phosphate.

The protein localises to the cytoplasm. The enzyme catalyses L-kynurenine + H2O = anthranilate + L-alanine + H(+). The catalysed reaction is 3-hydroxy-L-kynurenine + H2O = 3-hydroxyanthranilate + L-alanine + H(+). It participates in amino-acid degradation; L-kynurenine degradation; L-alanine and anthranilate from L-kynurenine: step 1/1. The protein operates within cofactor biosynthesis; NAD(+) biosynthesis; quinolinate from L-kynurenine: step 2/3. Catalyzes the cleavage of L-kynurenine (L-Kyn) and L-3-hydroxykynurenine (L-3OHKyn) into anthranilic acid (AA) and 3-hydroxyanthranilic acid (3-OHAA), respectively. This Aspergillus clavatus (strain ATCC 1007 / CBS 513.65 / DSM 816 / NCTC 3887 / NRRL 1 / QM 1276 / 107) protein is Kynureninase 1 (bna5-1).